A 138-amino-acid chain; its full sequence is Putative pre-16S rRNA nuclease (138 aa).

It belongs to the YqgF nuclease family.

Its subcellular location is the cytoplasm. In terms of biological role, could be a nuclease involved in processing of the 5'-end of pre-16S rRNA. The polypeptide is Putative pre-16S rRNA nuclease (Escherichia coli O7:K1 (strain IAI39 / ExPEC)).